Here is a 98-residue protein sequence, read N- to C-terminus: uncharacterized protein (98 aa).

Residues 30–98 (KKVVPSVKIH…RRKFCRVRLE (69 aa)) form the MOSC domain.

This is an uncharacterized protein from Haemophilus influenzae (strain ATCC 51907 / DSM 11121 / KW20 / Rd).